We begin with the raw amino-acid sequence, 182 residues long: Endoribonuclease YbeY (182 aa).

3 residues coordinate Zn(2+): histidine 120, histidine 124, and histidine 130. A disordered region spans residues 157–182 (RGVSFAPKPTGAGAFPSAADRDDTQN).

Belongs to the endoribonuclease YbeY family. Requires Zn(2+) as cofactor.

The protein resides in the cytoplasm. In terms of biological role, single strand-specific metallo-endoribonuclease involved in late-stage 70S ribosome quality control and in maturation of the 3' terminus of the 16S rRNA. This chain is Endoribonuclease YbeY, found in Corynebacterium jeikeium (strain K411).